Here is a 48-residue protein sequence, read N- to C-terminus: Phospholipase A2 superbin d (48 aa).

Tyr28, Gly30, and Gly32 together coordinate Ca(2+). Cys29 and Cys45 are disulfide-bonded. The active site involves His48.

Requires Ca(2+) as cofactor. Expressed by the venom gland.

It localises to the secreted. It catalyses the reaction a 1,2-diacyl-sn-glycero-3-phosphocholine + H2O = a 1-acyl-sn-glycero-3-phosphocholine + a fatty acid + H(+). Its function is as follows. Snake venom phospholipase A2 (PLA2) that inhibits collagen-induced platelet aggregation. In terms of inhibition of platelet aggregation, superbin d is less potent as superbin a, b, and c. PLA2 catalyzes the calcium-dependent hydrolysis of the 2-acyl groups in 3-sn-phosphoglycerides. In Austrelaps superbus (Lowland copperhead snake), this protein is Phospholipase A2 superbin d.